Here is a 418-residue protein sequence, read N- to C-terminus: Xanthosine permease (418 aa).

Residues 1–9 (MSIAMRLKV) lie on the Cytoplasmic side of the membrane. The chain crosses the membrane as a helical span at residues 10-30 (MSFLQYFIWGSWLVTLGSYMI). Residues 31 to 41 (NTLHFTGANVG) lie on the Periplasmic side of the membrane. The chain crosses the membrane as a helical span at residues 42–62 (MVYSSKGIAAIIMPGIMGIIA). Residues 63-70 (DKWLRAER) are Cytoplasmic-facing. A run of 2 helical transmembrane segments spans residues 71-91 (AYML…SVTD) and 92-112 (PDMM…TIAL). Over 113 to 136 (SNSVSYSCLAQAGLDPVTAFPPIR) the chain is Cytoplasmic. A helical membrane pass occupies residues 137 to 157 (VFGTVGFIVAMWAVSLLHLEL). The Periplasmic segment spans residues 158-159 (SS). Residues 160-180 (LQLYIASGASLLLSAYALTLP) traverse the membrane as a helical segment. The Cytoplasmic portion of the chain corresponds to 181-209 (KIPVAEKKATTSLASKLGLDAFVLFKNPR). The helical transmembrane segment at 210 to 230 (MAIFFLFAMMLGAVLQITNVF) threads the bilayer. Residues 231-254 (GNPFLHDFARNPEFADSFVVKYPS) are Periplasmic-facing. Residues 255–275 (ILLSVSQMAEVGFILTIPFFL) traverse the membrane as a helical segment. Over 276–277 (KR) the chain is Cytoplasmic. A helical transmembrane segment spans residues 278-298 (FGIKTVMLMSMVAWTLRFGFF). The Periplasmic segment spans residues 299 to 306 (AYGDPSTT). Residues 307–327 (GFILLLLSMIVYGCAFDFFNI) traverse the membrane as a helical segment. Topologically, residues 328 to 348 (SGSVFVEQEVDSSIRASAQGL) are cytoplasmic. A helical membrane pass occupies residues 349–369 (FMTMVNGVGAWVGSILSGMAV). Over 370 to 381 (DYFSVDGVKDWQ) the chain is Periplasmic. Residues 382–402 (TIWLVFAGYALFLAVIFFFGF) traverse the membrane as a helical segment. Topologically, residues 403–418 (KYNHDPEKIKHRAVTH) are cytoplasmic.

This sequence belongs to the major facilitator superfamily. Nucleoside:H(+) symporter (NHS) (TC 2.A.1.10) family.

The protein localises to the cell inner membrane. It catalyses the reaction xanthosine(in) + H(+)(in) = xanthosine(out) + H(+)(out). With respect to regulation, transport is abolished by the proton uncoupler 2,4-dinitrophenol. Functionally, uptake of xanthosine. Can also transport other nucleosides such as inosine, adenosine, cytidine, uridine and thymidine. Transport is driven by a proton motive force. The chain is Xanthosine permease from Escherichia coli (strain K12).